We begin with the raw amino-acid sequence, 558 residues long: 2-isopropylmalate synthase (558 aa).

In terms of domain architecture, Pyruvate carboxyltransferase spans proline 30–proline 303. Residues aspartate 39, histidine 242, histidine 244, and asparagine 278 each coordinate Mg(2+). The regulatory domain stretch occupies residues leucine 438–isoleucine 558.

This sequence belongs to the alpha-IPM synthase/homocitrate synthase family. LeuA type 2 subfamily. In terms of assembly, homodimer. Mg(2+) is required as a cofactor.

It is found in the cytoplasm. It catalyses the reaction 3-methyl-2-oxobutanoate + acetyl-CoA + H2O = (2S)-2-isopropylmalate + CoA + H(+). Its pathway is amino-acid biosynthesis; L-leucine biosynthesis; L-leucine from 3-methyl-2-oxobutanoate: step 1/4. Its function is as follows. Catalyzes the condensation of the acetyl group of acetyl-CoA with 3-methyl-2-oxobutanoate (2-ketoisovalerate) to form 3-carboxy-3-hydroxy-4-methylpentanoate (2-isopropylmalate). The sequence is that of 2-isopropylmalate synthase from Helicobacter hepaticus (strain ATCC 51449 / 3B1).